A 131-amino-acid chain; its full sequence is Protein Turandot M (131 aa).

An N-terminal signal peptide occupies residues 1-23; that stretch reads MNPTIYLSCLMVFSVFLLGKVNA.

This sequence belongs to the Turandot family.

It localises to the secreted. Its function is as follows. A humoral factor that may play a role in stress tolerance. Requires Mekk1 expression in the fat body to regulate response to septic injury and consequent immune response. This chain is Protein Turandot M, found in Drosophila melanogaster (Fruit fly).